The following is a 323-amino-acid chain: Aspartate carbamoyltransferase catalytic subunit (323 aa).

Residues R71 and T72 each contribute to the carbamoyl phosphate site. Residue K99 participates in L-aspartate binding. Carbamoyl phosphate-binding residues include R121, H151, and Q154. L-aspartate contacts are provided by R184 and R239. Residues G280 and P281 each coordinate carbamoyl phosphate.

It belongs to the aspartate/ornithine carbamoyltransferase superfamily. ATCase family. Heterododecamer (2C3:3R2) of six catalytic PyrB chains organized as two trimers (C3), and six regulatory PyrI chains organized as three dimers (R2).

The enzyme catalyses carbamoyl phosphate + L-aspartate = N-carbamoyl-L-aspartate + phosphate + H(+). Its pathway is pyrimidine metabolism; UMP biosynthesis via de novo pathway; (S)-dihydroorotate from bicarbonate: step 2/3. In terms of biological role, catalyzes the condensation of carbamoyl phosphate and aspartate to form carbamoyl aspartate and inorganic phosphate, the committed step in the de novo pyrimidine nucleotide biosynthesis pathway. This is Aspartate carbamoyltransferase catalytic subunit from Ralstonia nicotianae (strain ATCC BAA-1114 / GMI1000) (Ralstonia solanacearum).